The following is a 442-amino-acid chain: uncharacterized protein (442 aa).

The disordered stretch occupies residues 211–269 (LDYSTDKPEDSESEDIELEDSESEDSESEDIDQHGGQGPDDDEFNANFDDPQFDEFDFG). Positions 221–240 (SESEDIELEDSESEDSESED) are enriched in acidic residues.

The protein localises to the virion. This is an uncharacterized protein from Acanthamoeba polyphaga (Amoeba).